Reading from the N-terminus, the 479-residue chain is Serine carboxypeptidase-like 29 (479 aa).

The N-terminal stretch at 1–28 (MAKTRGSCCLVNALIAIAFLATAHLCEA) is a signal peptide. N-linked (GlcNAc...) asparagine glycosylation is found at Asn-47 and Asn-144. 3 cysteine pairs are disulfide-bonded: Cys-93/Cys-349, Cys-254/Cys-266, and Cys-290/Cys-317. Ser-186 is an active-site residue. N-linked (GlcNAc...) asparagine glycosylation is present at Asn-293. Active-site residues include Asp-386 and His-438.

It belongs to the peptidase S10 family. In terms of tissue distribution, expressed in seedlings, roots, leaves and flowers.

The protein localises to the secreted. Its function is as follows. Probable carboxypeptidase. This is Serine carboxypeptidase-like 29 (SCPL29) from Arabidopsis thaliana (Mouse-ear cress).